The sequence spans 456 residues: Bifunctional protein GlmU (456 aa).

The segment at 1 to 229 is pyrophosphorylase; the sequence is MLNSAMSVVI…ISETDGVNNR (229 aa). UDP-N-acetyl-alpha-D-glucosamine is bound by residues 11-14, lysine 25, glutamine 76, 81-82, 103-105, glycine 140, glutamate 154, asparagine 169, and asparagine 227; these read LAAG, GT, and YGD. Mg(2+) is bound at residue aspartate 105. Asparagine 227 lines the Mg(2+) pocket. The interval 230 to 250 is linker; sequence LQLSRLERIYQAEQAEKLLLS. Residues 251-456 form an N-acetyltransferase region; the sequence is GVMLRDPARF…QGWQRPVKKK (206 aa). The UDP-N-acetyl-alpha-D-glucosamine site is built by arginine 333 and lysine 351. Histidine 363 serves as the catalytic Proton acceptor. UDP-N-acetyl-alpha-D-glucosamine is bound by residues tyrosine 366 and asparagine 377. Acetyl-CoA-binding positions include alanine 380, 386–387, serine 405, alanine 423, and arginine 440; that span reads NY.

This sequence in the N-terminal section; belongs to the N-acetylglucosamine-1-phosphate uridyltransferase family. The protein in the C-terminal section; belongs to the transferase hexapeptide repeat family. As to quaternary structure, homotrimer. It depends on Mg(2+) as a cofactor.

It is found in the cytoplasm. It carries out the reaction alpha-D-glucosamine 1-phosphate + acetyl-CoA = N-acetyl-alpha-D-glucosamine 1-phosphate + CoA + H(+). It catalyses the reaction N-acetyl-alpha-D-glucosamine 1-phosphate + UTP + H(+) = UDP-N-acetyl-alpha-D-glucosamine + diphosphate. The protein operates within nucleotide-sugar biosynthesis; UDP-N-acetyl-alpha-D-glucosamine biosynthesis; N-acetyl-alpha-D-glucosamine 1-phosphate from alpha-D-glucosamine 6-phosphate (route II): step 2/2. It functions in the pathway nucleotide-sugar biosynthesis; UDP-N-acetyl-alpha-D-glucosamine biosynthesis; UDP-N-acetyl-alpha-D-glucosamine from N-acetyl-alpha-D-glucosamine 1-phosphate: step 1/1. It participates in bacterial outer membrane biogenesis; LPS lipid A biosynthesis. Catalyzes the last two sequential reactions in the de novo biosynthetic pathway for UDP-N-acetylglucosamine (UDP-GlcNAc). The C-terminal domain catalyzes the transfer of acetyl group from acetyl coenzyme A to glucosamine-1-phosphate (GlcN-1-P) to produce N-acetylglucosamine-1-phosphate (GlcNAc-1-P), which is converted into UDP-GlcNAc by the transfer of uridine 5-monophosphate (from uridine 5-triphosphate), a reaction catalyzed by the N-terminal domain. This is Bifunctional protein GlmU from Salmonella paratyphi A (strain ATCC 9150 / SARB42).